The primary structure comprises 370 residues: Lysophosphatidic acid receptor 4 (370 aa).

Residues 1–43 (MGDRRFIDFQFQDSNSSLRPRLGNATANNTCIVDDSFKYNLNG) lie on the Extracellular side of the membrane. 3 N-linked (GlcNAc...) asparagine glycosylation sites follow: Asn15, Asn24, and Asn28. A helical membrane pass occupies residues 44–64 (AVYSVVFILGLITNSVSLFVF). The Cytoplasmic segment spans residues 65-73 (CFRMKMRSE). Residues 74–94 (TAIFITNLAVSDLLFVCTLPF) form a helical membrane-spanning segment. Topologically, residues 95–112 (KIFYNFNRHWPFGDTLCK) are extracellular. A disulfide bridge links Cys111 with Cys188. The helical transmembrane segment at 113-133 (ISGTAFLTNIYGSMLFLTCIS) threads the bilayer. Residues 134-155 (VDRFLAIVYPFRSRTIRTRRNS) lie on the Cytoplasmic side of the membrane. Residues 156 to 176 (AIVCAGVWILVLSGGISASLF) form a helical membrane-spanning segment. The Extracellular portion of the chain corresponds to 177–203 (STTNVNNATTTCFEGFSKRVWKTYLSK). N-linked (GlcNAc...) asparagine glycosylation is present at Asn183. The helical transmembrane segment at 204–224 (ITIFIEVVGFIIPLILNVSCS) threads the bilayer. Residues 225 to 254 (SVVLRTLRKPATLSQIGTNKKKVLKMITVH) lie on the Cytoplasmic side of the membrane. Residues 255–275 (MAVFVVCFVPYNSVLFLYALV) form a helical membrane-spanning segment. Residues 276–294 (RSQAITNCFLERFAKIMYP) lie on the Extracellular side of the membrane. The chain crosses the membrane as a helical span at residues 295 to 315 (ITLCLATLNCCFDPFIYYFTL). The Cytoplasmic segment spans residues 316 to 370 (ESFQKSFYINAHIRMESLFKTETPLTTKPSLPAIQEEVSDQTTNNGGELMLESTF).

Belongs to the G-protein coupled receptor 1 family. In terms of tissue distribution, high expression in ovary. Not detected in the brain regions thalamus, putamen, caudate, frontal cortex, pons, hypothalamus and hippocampus.

Its subcellular location is the cell membrane. Functionally, receptor for lysophosphatidic acid (LPA), a mediator of diverse cellular activities. Transduces a signal by increasing the intracellular calcium ions and by stimulating adenylyl cyclase activity. The rank order of potency for agonists of this receptor is 1-oleoyl- &gt; 1-stearoyl- &gt; 1-palmitoyl- &gt; 1-myristoyl- &gt; 1-alkyl- &gt; 1-alkenyl-LPA. The chain is Lysophosphatidic acid receptor 4 (LPAR4) from Homo sapiens (Human).